The following is a 92-amino-acid chain: PqqA binding protein (92 aa).

This sequence belongs to the PqqD family. As to quaternary structure, monomer. Interacts with PqqE.

Its pathway is cofactor biosynthesis; pyrroloquinoline quinone biosynthesis. Functions as a PqqA binding protein and presents PqqA to PqqE, in the pyrroloquinoline quinone (PQQ) biosynthetic pathway. The sequence is that of PqqA binding protein from Pseudomonas paraeruginosa (strain DSM 24068 / PA7) (Pseudomonas aeruginosa (strain PA7)).